The following is a 414-amino-acid chain: Serine/threonine transporter SstT (414 aa).

Helical transmembrane passes span 16-36, 46-66, 84-104, 143-163, 180-200, 219-239, 300-320, and 332-352; these read GSLV…AWIS, LGTL…LMLV, ILFL…VFSF, ALLN…GFAL, AVTF…FGLV, LVVL…LLVF, MAGA…TLGV, and VVAS…LLLI.

Belongs to the dicarboxylate/amino acid:cation symporter (DAACS) (TC 2.A.23) family.

The protein resides in the cell inner membrane. The enzyme catalyses L-serine(in) + Na(+)(in) = L-serine(out) + Na(+)(out). It catalyses the reaction L-threonine(in) + Na(+)(in) = L-threonine(out) + Na(+)(out). Functionally, involved in the import of serine and threonine into the cell, with the concomitant import of sodium (symport system). The protein is Serine/threonine transporter SstT of Salmonella schwarzengrund (strain CVM19633).